A 351-amino-acid chain; its full sequence is Replication-associated protein (351 aa).

A CRESS-DNA virus Rep endonuclease domain is found at 8-116 (QINAKNYFLT…DGDTWRWGTF (109 aa)). The short motif at 15–18 (FLTY) is the RCR-1 element. A divalent metal cation-binding residues include glutamate 49, histidine 57, and histidine 59. The RCR-2 motif lies at 57–59 (HLH). The active-site For DNA cleavage activity is tyrosine 103. Residues 103 to 106 (YIDK) carry the RCR-3 motif. Aspartate 107 contributes to the a divalent metal cation binding site. Positions 143–153 (KSEALKILREL) are binding to RBR1. The oligomerization stretch occupies residues 156-176 (RDYLRDFHHISSNLDRIFTKP). 220-227 (GDSRTGKT) is an ATP binding site.

Belongs to the geminiviridae Rep protein family. In terms of assembly, homooligomer. Interacts with the replication enhancer protein (REn). Interacts with host retinoblastoma-related protein 1 (RBR1), and may thereby induce the transcription of host replicative enzymes even if the cell is not dividing anymore. Interacts with host PCNA. Interacts with host SCE1 protein. The cofactor is Mg(2+). Mn(2+) serves as cofactor.

It localises to the host nucleus. In terms of biological role, essential for the replication of viral ssDNA. The closed circular ssDNA genome is first converted to a superhelical dsDNA. Rep binds a specific region at the genome origin of replication. It introduces an endonucleolytic nick within the conserved sequence 5'-TAATATTAC-3' in the intergenic region of the genome present in all geminiviruses, thereby initiating the rolling circle replication (RCR). Following cleavage, binds covalently to the 5'-phosphate of DNA as a tyrosyl ester. The cleavage gives rise to a free 3'-OH that serves as a primer for the cellular DNA polymerase. The polymerase synthesizes the (+) strand DNA by rolling circle mechanism. After one round of replication, a Rep-catalyzed nucleotidyl transfer reaction releases a circular single-stranded virus genome, thereby terminating the replication. Displays origin-specific DNA cleavage, nucleotidyl transferase, ATPase and helicase activities. This chain is Replication-associated protein, found in Manihot esculenta (Cassava).